The chain runs to 761 residues: MAEFGELEAQDGVRMPWNIIPVATKKEQSIDSEVPVSAIYTPLKPLRSQSLLLPYSPLRCRTCRSVLNPYSVVDFSACNWGCPFCFNRNPFPLNYSSVADNNLPPELFPHSTTVEYLCDSFSSPSPPVFLFVVDTCLISEELDFLKSSLFQALDLLPDTSILGLITFDSLVRVYELGFPHCTKSYFFHGNKDCTKDQLLDQLSFFVKNPKPSSGVIAGARDGLSSDDIARFLLPASDCHFTLHSVLEELGNSPWPVAADHRPARCTGVALRIAASLLGACFPGSAARIMAFIGGPSTQGPGAIVSRELSDPIRSHKDIDKDSAMYYHKAVEFYEMLAKQLVHQGHVLDVFASSVDQVGIAELKVAVEQTGGFVVLAESFGHSVFRDSLKRVCQSGENDLGLSSCGIFEINCSKDIKVQGIIGPCASLEKKGPLCSDTAIGQGHTSAWKMCGLDNNTSICLVFEIAKIDTADVVLQSQSNQFYFQFLTYYQHSNGQTRLRVTTLSRRWVMGTESLQELSNGFDQEAAAVVMARLISSKMETQPEFNPQRWVDKALINLCTWFGDYQKGNPSSFSLSSQLSIFPQFVFHLRRSQFVQVFNNSPDETAYFRMILYRENVSNSVVMIQPSLISFSFHSPPEPILLDVASIAADRILLLDSYFTLVIFHGSTIAQWRKAGYHNQPEHQAFGHLLQSPRDYADTIMSERFPTPRLVICDQYGSQARFLLAKLNPCDGDAHFSGQSNVFTDDVSLSVFLDHLRRLIVH.

Zn(2+) contacts are provided by cysteine 60, cysteine 63, cysteine 82, and cysteine 85. The zinc finger-like stretch occupies residues 60 to 85 (CRTCRSVLNPYSVVDFSACNWGCPFC).

The protein belongs to the SEC23/SEC24 family. SEC24 subfamily. In terms of assembly, component of the coat protein complex II (COPII), composed of at least five proteins: the Sec23/24 complex, the Sec13/31 complex and Sar1.

Its subcellular location is the cytoplasmic vesicle. The protein resides in the COPII-coated vesicle membrane. It localises to the endoplasmic reticulum membrane. The protein localises to the membrane. In terms of biological role, component of the coat protein complex II (COPII) which promotes the formation of transport vesicles from the endoplasmic reticulum (ER). The coat has two main functions, the physical deformation of the endoplasmic reticulum membrane into vesicles and the selection of cargo molecules. The protein is Protein transport protein SEC23 C of Arabidopsis thaliana (Mouse-ear cress).